The chain runs to 122 residues: MIQMQTNLDVADNSGARRVMCIKVLGGSKRKYAGVGDIIVVSVKEAIPRGRVKKGDVMKAVVVRTAKDVRRPDGSVIRFDRNAAVLINNQKEPIGTRIFGPVPRELRARNHMKIISLAPEVL.

The protein belongs to the universal ribosomal protein uL14 family. In terms of assembly, part of the 50S ribosomal subunit. Forms a cluster with proteins L3 and L19. In the 70S ribosome, L14 and L19 interact and together make contacts with the 16S rRNA in bridges B5 and B8.

In terms of biological role, binds to 23S rRNA. Forms part of two intersubunit bridges in the 70S ribosome. The polypeptide is Large ribosomal subunit protein uL14 (Methylobacterium sp. (strain 4-46)).